The chain runs to 433 residues: Probable glycine dehydrogenase (decarboxylating) subunit 1 (433 aa).

Belongs to the GcvP family. N-terminal subunit subfamily. As to quaternary structure, the glycine cleavage system is composed of four proteins: P, T, L and H. In this organism, the P 'protein' is a heterodimer of two subunits.

The enzyme catalyses N(6)-[(R)-lipoyl]-L-lysyl-[glycine-cleavage complex H protein] + glycine + H(+) = N(6)-[(R)-S(8)-aminomethyldihydrolipoyl]-L-lysyl-[glycine-cleavage complex H protein] + CO2. In terms of biological role, the glycine cleavage system catalyzes the degradation of glycine. The P protein binds the alpha-amino group of glycine through its pyridoxal phosphate cofactor; CO(2) is released and the remaining methylamine moiety is then transferred to the lipoamide cofactor of the H protein. The chain is Probable glycine dehydrogenase (decarboxylating) subunit 1 from Thermoplasma acidophilum (strain ATCC 25905 / DSM 1728 / JCM 9062 / NBRC 15155 / AMRC-C165).